The sequence spans 274 residues: MKLPKGTRSSVYFAQHPEKEPLPSRQEVKQTPVIMAKIKGPGPAKYLRPSCTGYIDHDISMFKAPAYTLHSRHSEKRMVCHSSPGPCYLLDPKITRFGMSSCPQVPMEERISNLRLNPTLASCQYYFEKIHPPGERRAPQYTFGYRRPYRVMDLNPAPNQYQMPLLLGPNTPVSRAAPCYSLASRDKNWFYKEDVAGGPGPTTYARPEPSIYQNRSPTYSMAKRFAYPLDLTPRPGPGSHEVQQVTVHKPHIPAFTMGIKHSLHLCPLVIDIRD.

The segment at 1-27 is disordered; sequence MKLPKGTRSSVYFAQHPEKEPLPSRQE. Basic and acidic residues predominate over residues 16–27; the sequence is HPEKEPLPSRQE. STPGR repeat units lie at residues 199 to 224 and 235 to 260; these read PGPTTYARPEPSIYQNRSPTYSMAKR and PGPGSHEVQQVTVHKPHIPAFTMGIK.

The protein belongs to the CIMAP family.

The polypeptide is Protein CIMAP1C (Homo sapiens (Human)).